The chain runs to 411 residues: Dihydrosphingosine 1-phosphate phosphatase C823.11 (411 aa).

Residues 1–74 (MVHKKKNVDI…LDVYFMYTAT (74 aa)) lie on the Lumenal side of the membrane. The helical transmembrane segment at 75 to 95 (LGTHVFFMLALPIFFWSGCIY) threads the bilayer. The Cytoplasmic portion of the chain corresponds to 96-99 (YTLD). The chain crosses the membrane as a helical span at residues 100 to 120 (ITQLFAAGVYFSGCIKDYFCL). Residues 115 to 123 (KDYFCLPRP) form a phosphatase sequence motif I region. Topologically, residues 121–170 (PRPRSPPMVRLTLSSDAEYEYGFPSTHTTNAMATGFYSLFLLLSMSDSMS) are lumenal. Positions 144 to 147 (PSTH) are phosphatase sequence motif II. His147 acts as the Proton donor in catalysis. A helical transmembrane segment spans residues 171-191 (SISYYFLLSLVLLYIASISLG). The phosphatase sequence motif III stretch occupies residues 191–202 (GRIYCGMHGFMD). The Cytoplasmic portion of the chain corresponds to 192-195 (RIYC). A helical membrane pass occupies residues 196–216 (GMHGFMDVSTGTILGVTLAIF). His198 (nucleophile) is an active-site residue. Over 217 to 233 (QWKYADFFHNVWSSSST) the chain is Lumenal. A helical membrane pass occupies residues 234-254 (SVPILSVVLALFFIWFHPQPA). The Cytoplasmic portion of the chain corresponds to 255-259 (ERCIC). The helical transmembrane segment at 260–280 (LEDSISFISVIMGIDLGTWFA) threads the bilayer. Residues 281-293 (SPESLSHLHDNLN) are Lumenal-facing. Residues 294–314 (SYFLLKFFVRVLFGVCMILIW) traverse the membrane as a helical segment. The Cytoplasmic portion of the chain corresponds to 315–387 (KSFAKQALLA…VRFDIETIAR (73 aa)). The helical transmembrane segment at 388 to 408 (IIVYSGIGFLCTYFAPKVFLK) threads the bilayer. Residues 409–411 (WKI) lie on the Lumenal side of the membrane.

Belongs to the type 2 lipid phosphate phosphatase family.

It is found in the endoplasmic reticulum membrane. Its function is as follows. Dihydrosphingosine 1-phosphate phosphatase required for efficient ceramide synthesis from exogenous sphingoid bases. Involved in endocytosis and calcium-mediated signaling. The protein is Dihydrosphingosine 1-phosphate phosphatase C823.11 of Schizosaccharomyces pombe (strain 972 / ATCC 24843) (Fission yeast).